Here is a 330-residue protein sequence, read N- to C-terminus: Cytosolic iron-sulfur protein assembly protein 1 (330 aa).

WD repeat units follow at residues 12 to 53 (LYKE…DVLD), 56 to 95 (AHKK…DRTF), 105 to 144 (GHEN…EEYE), 151 to 190 (EHSQ…WECV), 195 to 236 (GHEG…EDDQ), 248 to 286 (VHKR…WKVF), and 292 to 330 (CHGV…EKAA).

Belongs to the WD repeat CIA1 family. Interacts with NAR1.

The protein resides in the cytoplasm. The protein localises to the nucleus. Functionally, essential component of the cytosolic iron-sulfur (Fe/S) protein assembly machinery. Required for the maturation of extramitochondrial Fe/S proteins. The sequence is that of Cytosolic iron-sulfur protein assembly protein 1 from Saccharomyces cerevisiae (strain ATCC 204508 / S288c) (Baker's yeast).